A 291-amino-acid polypeptide reads, in one-letter code: Beta-lactamase CTX-M-15 (291 aa).

The N-terminal stretch at 1–28 (MVKKSLRQFTLMATATVTLLLGSVPLYA) is a signal peptide. Catalysis depends on S73, which acts as the Nucleophile; acyl-ester intermediate. Residues K76, S133, E169, and S240 each contribute to the a beta-lactam site.

This sequence belongs to the class-A beta-lactamase family. In terms of assembly, monomer.

It localises to the secreted. It carries out the reaction a beta-lactam + H2O = a substituted beta-amino acid. With respect to regulation, inhibited by the beta-lactamase-blocking agents clavulanic acid and avibactam, via a covalent binding to Ser-73. Extended-spectrum beta-lactamase (ESBL) which confers resistance to penicillins, as well as first, second, third and fourth-generation cephalosporins. Has cefotaxime- and ceftazidime-hydrolyzing activity. Inactive against the carbapenem antibiotics, imipenem, meropenem and ertapenem. This Escherichia coli O25b:H4 protein is Beta-lactamase CTX-M-15.